Consider the following 430-residue polypeptide: Citrate synthase (430 aa).

Residues His-305 and Asp-363 contribute to the active site.

This sequence belongs to the citrate synthase family. As to quaternary structure, homohexamer.

It carries out the reaction oxaloacetate + acetyl-CoA + H2O = citrate + CoA + H(+). Its pathway is carbohydrate metabolism; tricarboxylic acid cycle; isocitrate from oxaloacetate: step 1/2. Its activity is regulated as follows. Allosterically inhibited by NADH. The chain is Citrate synthase (gltA) from Coxiella burnetii (strain RSA 493 / Nine Mile phase I).